A 121-amino-acid polypeptide reads, in one-letter code: Small ribosomal subunit protein uS11 (121 aa).

It belongs to the universal ribosomal protein uS11 family. As to quaternary structure, part of the 30S ribosomal subunit. Interacts with proteins S7 and S18. Binds to IF-3.

Located on the platform of the 30S subunit, it bridges several disparate RNA helices of the 16S rRNA. Forms part of the Shine-Dalgarno cleft in the 70S ribosome. The chain is Small ribosomal subunit protein uS11 from Mycoplasmoides gallisepticum (strain R(low / passage 15 / clone 2)) (Mycoplasma gallisepticum).